We begin with the raw amino-acid sequence, 201 residues long: NAD(P)H quinone oxidoreductase PST2 (201 aa).

The Flavodoxin-like domain occupies V6 to F192. FMN contacts are provided by residues S12 to H16 and V112 to G164.

Belongs to the WrbA family. FMN is required as a cofactor.

It localises to the cell membrane. It carries out the reaction a quinone + NADH + H(+) = a quinol + NAD(+). It catalyses the reaction a quinone + NADPH + H(+) = a quinol + NADP(+). Functionally, flavodoxin-like protein (FLP) that plays a role in cell wall integrity, oxidative stress protection and virulence. FLPs act as NAD(P)H quinone oxidoreductases. Reduces ubiquinone (coenzyme Q), enabling it to serve as an antioxidant in the membrane. In Candida albicans (strain SC5314 / ATCC MYA-2876) (Yeast), this protein is NAD(P)H quinone oxidoreductase PST2.